The primary structure comprises 421 residues: MAMTITEKILAEHAGLDKVVPGQLITAQLDLALANDITGPVSIREFEKFGVETVWDKTKVALVPDHFTPNKDIASAELSKALREFAKKQGIVHYWEQGRVGVEHCLLPEQGVTLPGDVIIGADSHTCTYGALGAFATGVGSTDLAAGMATGEAWFRIPESIKFIFKGTNFQPWVSGKDLILYTIGKIGVDGARYRSMEFTGEGIAALSMDGRLTMCNMAVEAGAKNGIIPPDEKTLAYVNERAKRPYKVYHSDPDAQYVEVYEWDVADIPLQVAFPHLPENAKPVSEGKGIKIDQVVIGSCTNGRLEDMQVAAQILKGQKVHGDVRLIVIPGTQDIYKQAMQEGLIDIFIDAGAVVSTPTCGPCLGGYMGILAKGERALSTTNRNFVGRMGHPESEVYLSGPAVAAASAVTGEISHPEEVL.

[4Fe-4S] cluster is bound by residues Cys-301, Cys-361, and Cys-364.

This sequence belongs to the aconitase/IPM isomerase family. LeuC type 2 subfamily. As to quaternary structure, heterodimer of LeuC and LeuD. The cofactor is [4Fe-4S] cluster.

It catalyses the reaction (2R,3S)-3-isopropylmalate = (2S)-2-isopropylmalate. Its pathway is amino-acid biosynthesis; L-leucine biosynthesis; L-leucine from 3-methyl-2-oxobutanoate: step 2/4. In terms of biological role, catalyzes the isomerization between 2-isopropylmalate and 3-isopropylmalate, via the formation of 2-isopropylmaleate. This Desulfitobacterium hafniense (strain Y51) protein is 3-isopropylmalate dehydratase large subunit.